A 317-amino-acid chain; its full sequence is MAKNPPENCEGCHILNAEALKSKKIRKSLKICGLVFGILALTLIVLFWGSKHFWPEVSKKTYGMEHTFYSNGEKKKISMEIDPITRTEIFRSGNGTDETLEVHDFKNGYTGIYFVGLQKCFIKTQIKVIPEFSEPEEEIDENEEITTTFFEQSVIWVPAEKPIENRDFLKNSKILEICDNVTMYWINPTLIAVSELQDFEEDGEDLHFPTSEKKGIDQNEQWVVPQVKVEKTRRTRQASEEDLPVNDYTENGIEFDPMLDERGYCCIYCRRGNRYCRRVCEPLLGYYPYPYCYQGGRVICRVIMPCNWWVARMLGRV.

At 1-30 the chain is on the cytoplasmic side; the sequence is MAKNPPENCEGCHILNAEALKSKKIRKSLK. A helical; Signal-anchor for type II membrane protein membrane pass occupies residues 31 to 50; it reads ICGLVFGILALTLIVLFWGS. The Extracellular segment spans residues 51–317; the sequence is KHFWPEVSKK…WWVARMLGRV (267 aa). The 94-residue stretch at 93-186 folds into the BRICHOS domain; that stretch reads GNGTDETLEV…ICDNVTMYWI (94 aa). A glycan (N-linked (GlcNAc...) asparagine) is linked at asparagine 94. A disulfide bridge links cysteine 120 with cysteine 178. Asparagine 180 is a glycosylation site (N-linked (GlcNAc...) asparagine). Serine 239 is subject to Phosphoserine.

It belongs to the chondromodulin-1 family. As to expression, highly expressed in tendons.

Its subcellular location is the membrane. The protein resides in the nucleus envelope. May be an angiogenesis inhibitor. This chain is Tenomodulin (Tnmd), found in Rattus norvegicus (Rat).